The sequence spans 337 residues: tRNA N6-adenosine threonylcarbamoyltransferase (337 aa).

His111 and His115 together coordinate Fe cation. Residues 134–138 (LVSGG), Asp167, Gly180, and Asn272 contribute to the substrate site. Position 300 (Asp300) interacts with Fe cation.

Belongs to the KAE1 / TsaD family. The cofactor is Fe(2+).

The protein resides in the cytoplasm. The enzyme catalyses L-threonylcarbamoyladenylate + adenosine(37) in tRNA = N(6)-L-threonylcarbamoyladenosine(37) in tRNA + AMP + H(+). Its function is as follows. Required for the formation of a threonylcarbamoyl group on adenosine at position 37 (t(6)A37) in tRNAs that read codons beginning with adenine. Is involved in the transfer of the threonylcarbamoyl moiety of threonylcarbamoyl-AMP (TC-AMP) to the N6 group of A37, together with TsaE and TsaB. TsaD likely plays a direct catalytic role in this reaction. This chain is tRNA N6-adenosine threonylcarbamoyltransferase, found in Aeromonas salmonicida (strain A449).